A 176-amino-acid chain; its full sequence is Adenylyl-sulfate kinase (176 aa).

G12 to S19 serves as a coordination point for ATP. The Phosphoserine intermediate role is filled by S86.

The protein belongs to the APS kinase family.

It carries out the reaction adenosine 5'-phosphosulfate + ATP = 3'-phosphoadenylyl sulfate + ADP + H(+). It functions in the pathway sulfur metabolism; hydrogen sulfide biosynthesis; sulfite from sulfate: step 2/3. Its function is as follows. Catalyzes the synthesis of activated sulfate. The polypeptide is Adenylyl-sulfate kinase (Gloeothece citriformis (strain PCC 7424) (Cyanothece sp. (strain PCC 7424))).